We begin with the raw amino-acid sequence, 90 residues long: Protein RALF-like 3 (90 aa).

Positions 1-29 (MSNLRGTNRFILVAVLVSFVFLSIMNAEA) are cleaved as a signal peptide. 2 cysteine pairs are disulfide-bonded: C59-C67 and C80-C86.

The protein belongs to the plant rapid alkalinization factor (RALF) family.

It localises to the secreted. Its function is as follows. Cell signaling peptide that may regulate plant stress, growth, and development. Mediates a rapid alkalinization of extracellular space by mediating a transient increase in the cytoplasmic Ca(2+) concentration leading to a calcium-dependent signaling events through a cell surface receptor and a concomitant activation of some intracellular mitogen-activated protein kinases. In Arabidopsis thaliana (Mouse-ear cress), this protein is Protein RALF-like 3 (RALFL3).